Consider the following 445-residue polypeptide: METILQHVPVGQKVGIAFSGGLDTSAALRWMKNKGALPYAYTANLGQPDEEDYDAIPRKAMEYGAEKARLIDCRPQLANEGIAAIQSGAFHISTGGITYFNTTPLGRAVTGTMLVAAMKEDDVNIWGDGSTFKGNDIERFYRYGLLTNPALKIYKPWLDQAFIDELGGRAEMSAFMTKEGFGYKMSAEKAYSTDSNMLGATHEAKDLEHLNSGIRIVNPIMGVAFWKPEVEVKAEEVSITFDEGRPVAVNGREIADPVEMFLELNRIGGRHGLGMSDQIENRIIEAKSRGIYEAPGMALLHIAYERLVTGIHNEDTIEQYRINGLRLGRLLYQGRWFDPQAIMLRETAQRWVARAVTGTVTLELRRGNDYSILNTESPNLTYAPERLSMEKVEDAPFSPADRIGQLTMRNLDLMDTRDKLAIYSKAGLLSLGTANALPQLDGGKK.

Residues 17-25 (AFSGGLDTS) and Ala43 each bind ATP. An L-citrulline-binding site is contributed by Tyr99. 2 residues coordinate ATP: Gly129 and Thr131. Thr131, Asn135, and Asp136 together coordinate L-aspartate. Residue Asn135 coordinates L-citrulline. Asp136 lines the ATP pocket. Residues Arg139 and Ser192 each contribute to the L-citrulline site. Residue Asp194 coordinates ATP. The L-citrulline site is built by Thr201, Glu203, and Glu280.

The protein belongs to the argininosuccinate synthase family. Type 2 subfamily. As to quaternary structure, homotetramer.

The protein localises to the cytoplasm. It catalyses the reaction L-citrulline + L-aspartate + ATP = 2-(N(omega)-L-arginino)succinate + AMP + diphosphate + H(+). Its pathway is amino-acid biosynthesis; L-arginine biosynthesis; L-arginine from L-ornithine and carbamoyl phosphate: step 2/3. The sequence is that of Argininosuccinate synthase from Ralstonia pickettii (strain 12J).